Consider the following 344-residue polypeptide: Heat-inducible transcription repressor HrcA (344 aa).

Belongs to the HrcA family.

Functionally, negative regulator of class I heat shock genes (grpE-dnaK-dnaJ and groELS operons). Prevents heat-shock induction of these operons. This Streptococcus pneumoniae (strain Taiwan19F-14) protein is Heat-inducible transcription repressor HrcA.